The chain runs to 1469 residues: MLVTYNGHVDDNSINNQIIENNVQTDDLNNSFDNHKDQIELKSYKETENIETENIETENKEVETINNEIIKISQEIEISKSQEIDKTNNNINEQNNDNFEIPEKELQEIEACPCNKNIIINDSNNYNVTIIQNDDSIVIENCTDCGDHITPKEEEEKEKEKEKEKEKEKEKEKEKEKDSEESLQEQCLNKENESIDNDNNNNIINNNNNDSIIIIKESTDDKKEIPSIECIQNNQNNQNNNDSPINKEIEDDNNNNIEKDGADIHIKEEQVEKVQVEEKEVEEIQVKDNANSVTSTIVTATDVTTTTTTTTTTTSSSNNCTNSISNTDKSTTTNCPPVENGGDSDGKLMYPLYKKVFGNKTISKLIFKNIRKIQRFKSITIESPSSPLPLSDIHGYGQVKSYSNITFEYMVFNWMIDLLHDKIVKNNEDLNFNNNNNNNNNNNNNNNNNSQPYHYQLKGSQSHEILLKNLKPNDENSKQLLKSFFKKYCDRNSILKKLTEYNNPLLTKLVLKDYLNDFKPVKNNNNNNNNNNNNNNNNNNNNNNNNNNNNNNNNNINNNSYFYKSVPNELLFNLILQQGEIKLVKQVLNGKYKELKLNQMSIHYALKSTLKNEIIQYIINNNRKELSQLYLKSNKCIVGSRRLFLSIFVPPPTTTTTTTNTNSTNTNSTINATSPPHTPKLSSSPLLTTTTTPPASPTQSRIPLVRTLTQLPSRIPLVRTQTQLQTKIQPKSPQPQPTAAPEPQKPPTPSIVKNQMHSQINITPQTKDYIEIGEMIGFEFRIFLELFEVTFPNVPKFRITESCVDSLKELVLKRSIENQNNKSIYSFDVLFDIFRITLHLVLIGCLKLIGDHENNNYNNNNNYNNNINNINYNNNINNNSYNNINNNNYNNNNKTTTTTTTTTTTTTANSNKSKTNKNKNNNNNNNNNNNNNNNNNNNNNNNNNNNNNNNNNEKNIINNDNNINNNEIDISKDKKDLVKFRAIFNQINNLRQTYLFKKKNQEFEIEIKKLFFLDFIPLFGFNEKLLFEKSCLKIDLLHEEKKYGWIIGQEEQPNTLFIKEQLIKSSYEKLDANLFGLSVFLFGIERFSSGSQWFSYPNKIVNNKITNGPYNGNLDKQIQFLEGMIENCKTYKLFDRNETIGIIEAILNSIVITIQNNNDNNNNNNNNNNNNNNNNNNNNNNNNNYNIISIFEKKIQKLLGNCPIKVGAHSLFHSLELIEFCFNNCRDLINFSCCDSMNTLYRDSKFLSIIEFYHRNNLFFGNCSMEIGKSRKRSIAEKIYSFGYRFSNNLIPLAVYNDRESGYLFYYAVEKFIIEKLFNGDGSDYDESNCSSSSSSSESNGIDSGSESGRGRCRSNTTNNSNNINNSSNNNQRFQLHFLLSGNSIPRVIKRNEIFLPTNSKLKWFNLLLSSCGELFTYFPSNEGLCSDFDTPKTNFNLNYEEFYILKFITPFLYKKFKNSFSIKKDFYH.

Residues 146–180 (GDHITPKEEEEKEKEKEKEKEKEKEKEKEKEKDSE) are compositionally biased toward basic and acidic residues. Disordered stretches follow at residues 146-186 (GDHI…LQEQ), 231-255 (IQNN…DNNN), 306-344 (TTTT…GGDS), 430-455 (LNFN…PYHY), 520-560 (PVKN…NNNS), 654-706 (TTTT…PLVR), 719-755 (RTQT…VKNQ), 881-958 (YNNI…NIIN), and 1329-1369 (NCSS…NSSN). 5 stretches are compositionally biased toward low complexity: residues 232-241 (QNNQNNQNNN), 306-327 (TTTT…ISNT), 430-449 (LNFN…NNNN), 523-559 (NNNN…INNN), and 654-693 (TTTT…TTTP). Residues 719–731 (RTQTQLQTKIQPK) are compositionally biased toward polar residues. Positions 732 to 749 (SPQPQPTAAPEPQKPPTP) are enriched in pro residues. Composition is skewed to low complexity over residues 1329-1347 (NCSS…SGSE) and 1354-1369 (RSNT…NSSN).

This is an uncharacterized protein from Dictyostelium discoideum (Social amoeba).